A 523-amino-acid polypeptide reads, in one-letter code: Nuclear receptor ROR-alpha (523 aa).

Over residues 1–26 (MESAPAAPDPAASEPGSSGADAAAGS) the composition is skewed to low complexity. The tract at residues 1 to 63 (MESAPAAPDP…SRGISVTKKT (63 aa)) is disordered. K38 carries the post-translational modification N6-methyllysine. Over residues 48–57 (QSYSSTSRGI) the composition is skewed to polar residues. 2 consecutive NR C4-type zinc fingers follow at residues 73–93 (CKIC…CEGC) and 109–133 (CPRQ…LQKC). Residues 73-138 (CKICGDKSSG…RLQKCLAVGM (66 aa)) constitute a DNA-binding region (nuclear receptor). The disordered stretch occupies residues 154 to 183 (DSLYAEVQKHRMQQQQRDHQQQPGEAEPLT). Position 183 is a phosphothreonine; by MAPK1 (T183). A Glycyl lysine isopeptide (Lys-Gly) (interchain with G-Cter in SUMO) cross-link involves residue K240. Residues 272–510 (ELEHLAQNIS…LHFPPLYKEL (239 aa)) form the NR LBD domain. An AF-2 motif is present at residues 506–523 (LYKELFTSEFEPAMQIDG).

It belongs to the nuclear hormone receptor family. NR1 subfamily. In terms of assembly, monomer. Interacts (via the DNA-binding domain) with HIF1A; the interaction enhances HIF1A transcription under hypoxia through increasing protein stability. Interacts with CEBPB; the interaction disrupts the interaction CEBPB:EP300. Interacts with the coactivators NCOA2, PPARGC1A (via LXXLL motif), EP300 and MED1. Interacts with the corepressor NCOR1. Interacts with MAGED1 and CTNNB1. Interacts with CRY1 and PER2. Interacts (via AF-2 motif) with PROX1. Interacts with NRIP1. Isoform 4 interacts (via AF-2 motif) with isoform 1 of FOXP3 (via LXXLL motif). Phosphorylation by conventional PKCs in neurons inhibits transcriptional activity. Phosphorylated on Thr-183 by MAPK1/ERK1 in vitro. In terms of processing, sumoylated by SENP1 and SENP2. Sumoylation, promoted by PIAS2, PIAS3, PIAS4 but not PIAS1, enhances the transcriptional activity. Desumoylated by SENP1. Post-translationally, ubiquitinated, leading to its degradation by the proteasome. Proteasomal degradation is required for efficient transcriptional activity and is prevented by HR. Monomethylated at Lys-38 by EZH2, this creates a degron recognized by a DCX (DDB1-DCAF1/VPRBP-CUL4A-RBX1) E3 ubiquitin ligase complex. Widely expressed in a number of tissues. Expressed in both regulatory T-cells (Treg) and effector T-cells (Teff). Isoform 4: Highly expressed in the central nervous system, including in the cerebellum.

It is found in the nucleus. In terms of biological role, nuclear receptor that binds DNA as a monomer to ROR response elements (RORE) containing a single core motif half-site 5'-AGGTCA-3' preceded by a short A-T-rich sequence. Key regulator of embryonic development, cellular differentiation, immunity, circadian rhythm as well as lipid, steroid, xenobiotics and glucose metabolism. Considered to have intrinsic transcriptional activity, have some natural ligands like oxysterols that act as agonists (25-hydroxycholesterol) or inverse agonists (7-oxygenated sterols), enhancing or repressing the transcriptional activity, respectively. Recruits distinct combinations of cofactors to target genes regulatory regions to modulate their transcriptional expression, depending on the tissue, time and promoter contexts. Regulates genes involved in photoreceptor development including OPN1SW, OPN1SM and ARR3 and skeletal muscle development with MYOD1. Required for proper cerebellum development. Regulates SHH gene expression, among others, to induce granule cells proliferation as well as expression of genes involved in calcium-mediated signal transduction. Regulates the circadian expression of several clock genes, including CLOCK, BMAL1, NPAS2 and CRY1. Competes with NR1D1 for binding to their shared DNA response element on some clock genes such as BMAL1, CRY1 and NR1D1 itself, resulting in NR1D1-mediated repression or RORA-mediated activation of clock genes expression, leading to the circadian pattern of clock genes expression. Therefore influences the period length and stability of the clock. Regulates genes involved in lipid metabolism such as apolipoproteins APOA1, APOA5, APOC3 and PPARG. In liver, has specific and redundant functions with RORC as positive or negative modulator of expression of genes encoding phase I and phase II proteins involved in the metabolism of lipids, steroids and xenobiotics, such as CYP7B1 and SULT2A1. Induces a rhythmic expression of some of these genes. In addition, interplays functionally with NR1H2 and NR1H3 for the regulation of genes involved in cholesterol metabolism. Also involved in the regulation of hepatic glucose metabolism through the modulation of G6PC1 and PCK1. In adipose tissue, plays a role as negative regulator of adipocyte differentiation, probably acting through dual mechanisms. May suppress CEBPB-dependent adipogenesis through direct interaction and PPARG-dependent adipogenesis through competition for DNA-binding. Downstream of IL6 and TGFB and synergistically with RORC isoform 2, is implicated in the lineage specification of uncommitted CD4(+) T-helper (T(H)) cells into T(H)17 cells, antagonizing the T(H)1 program. Probably regulates IL17 and IL17F expression on T(H) by binding to the essential enhancer conserved non-coding sequence 2 (CNS2) in the IL17-IL17F locus. Involved in hypoxia signaling by interacting with and activating the transcriptional activity of HIF1A. May inhibit cell growth in response to cellular stress. May exert an anti-inflammatory role by inducing CHUK expression and inhibiting NF-kappa-B signaling. The chain is Nuclear receptor ROR-alpha (RORA) from Homo sapiens (Human).